The primary structure comprises 105 residues: Nucleoid-associated protein SSP2277 (105 aa).

Residues 1 to 41 form a disordered region; the sequence is MRGGGNMQQMMKQMQKMQKKMGEEQEKLKEEKVQGTAGGGM. Positions 7 to 16 are enriched in low complexity; that stretch reads MQQMMKQMQK. A compositionally biased stretch (basic and acidic residues) spans 20 to 33; that stretch reads KMGEEQEKLKEEKV.

This sequence belongs to the YbaB/EbfC family. Homodimer.

The protein resides in the cytoplasm. The protein localises to the nucleoid. Functionally, binds to DNA and alters its conformation. May be involved in regulation of gene expression, nucleoid organization and DNA protection. The sequence is that of Nucleoid-associated protein SSP2277 from Staphylococcus saprophyticus subsp. saprophyticus (strain ATCC 15305 / DSM 20229 / NCIMB 8711 / NCTC 7292 / S-41).